The sequence spans 437 residues: Epsilon-sarcoglycan (437 aa).

Over 1–317 the chain is Extracellular; the sequence is MQLPRWWELG…LKSRDYYTDF (317 aa). An N-linked (GlcNAc...) asparagine glycan is attached at Asn200. The helical transmembrane segment at 318–338 threads the bilayer; the sequence is LITLAVPSAVALVLFLILAYI. Over 339 to 437 the chain is Cytoplasmic; it reads MCCRREGVEK…QQQTTGKWYP (99 aa).

Belongs to the sarcoglycan alpha/epsilon family. In terms of processing, N-glycosylated. Post-translationally, ubiquitinated, leading to its degradation by the proteasome.

Its subcellular location is the cell membrane. It localises to the sarcolemma. The protein localises to the cytoplasm. It is found in the cytoskeleton. The protein resides in the cell projection. Its subcellular location is the dendrite. It localises to the golgi apparatus. Its function is as follows. Component of the sarcoglycan complex, a subcomplex of the dystrophin-glycoprotein complex which forms a link between the F-actin cytoskeleton and the extracellular matrix. This Macaca fascicularis (Crab-eating macaque) protein is Epsilon-sarcoglycan.